Reading from the N-terminus, the 423-residue chain is Gamma-glutamyl phosphate reductase (423 aa).

Belongs to the gamma-glutamyl phosphate reductase family.

The protein resides in the cytoplasm. The enzyme catalyses L-glutamate 5-semialdehyde + phosphate + NADP(+) = L-glutamyl 5-phosphate + NADPH + H(+). It functions in the pathway amino-acid biosynthesis; L-proline biosynthesis; L-glutamate 5-semialdehyde from L-glutamate: step 2/2. Its function is as follows. Catalyzes the NADPH-dependent reduction of L-glutamate 5-phosphate into L-glutamate 5-semialdehyde and phosphate. The product spontaneously undergoes cyclization to form 1-pyrroline-5-carboxylate. The sequence is that of Gamma-glutamyl phosphate reductase from Pseudomonas putida (strain W619).